The chain runs to 210 residues: Probable high-affinity nitrate transporter-activating protein 2.2 (210 aa).

The N-terminal stretch at 1–23 (MARFGAVIHRVFLPLLLLLVVLG) is a signal peptide. A helical transmembrane segment spans residues 182-202 (IEVAAGVLSAFSVAALAVFLV).

This sequence belongs to the NAR2 family.

Its subcellular location is the cell membrane. Its function is as follows. Involved in nitrate transport. This chain is Probable high-affinity nitrate transporter-activating protein 2.2 (NAR2.2), found in Oryza sativa subsp. japonica (Rice).